Consider the following 549-residue polypeptide: Oxygen-dependent choline dehydrogenase (549 aa).

Asp-4–Glu-33 is an FAD binding site. Residue His-465 is the Proton acceptor of the active site. The tract at residues Lys-528–Arg-549 is disordered.

It belongs to the GMC oxidoreductase family. FAD serves as cofactor.

The enzyme catalyses choline + A = betaine aldehyde + AH2. It catalyses the reaction betaine aldehyde + NAD(+) + H2O = glycine betaine + NADH + 2 H(+). It participates in amine and polyamine biosynthesis; betaine biosynthesis via choline pathway; betaine aldehyde from choline (cytochrome c reductase route): step 1/1. In terms of biological role, involved in the biosynthesis of the osmoprotectant glycine betaine. Catalyzes the oxidation of choline to betaine aldehyde and betaine aldehyde to glycine betaine at the same rate. This chain is Oxygen-dependent choline dehydrogenase, found in Agrobacterium fabrum (strain C58 / ATCC 33970) (Agrobacterium tumefaciens (strain C58)).